The chain runs to 127 residues: uncharacterized protein (127 aa).

2 helical membrane passes run 64-84 (GYYI…FGYL) and 101-118 (FFHF…AIYY).

It is found in the membrane. This is an uncharacterized protein from Saccharomyces cerevisiae (strain ATCC 204508 / S288c) (Baker's yeast).